The chain runs to 82 residues: Small ribosomal subunit protein bS16 (82 aa).

This sequence belongs to the bacterial ribosomal protein bS16 family.

The polypeptide is Small ribosomal subunit protein bS16 (Caldanaerobacter subterraneus subsp. tengcongensis (strain DSM 15242 / JCM 11007 / NBRC 100824 / MB4) (Thermoanaerobacter tengcongensis)).